A 323-amino-acid polypeptide reads, in one-letter code: Acetyl-coenzyme A carboxylase carboxyl transferase subunit alpha (323 aa).

A CoA carboxyltransferase C-terminal domain is found at 40–293; that stretch reads LAEKSLQLTK…RKALAESLKT (254 aa).

This sequence belongs to the AccA family. Acetyl-CoA carboxylase is a heterohexamer composed of biotin carboxyl carrier protein (AccB), biotin carboxylase (AccC) and two subunits each of ACCase subunit alpha (AccA) and ACCase subunit beta (AccD).

The protein localises to the cytoplasm. The enzyme catalyses N(6)-carboxybiotinyl-L-lysyl-[protein] + acetyl-CoA = N(6)-biotinyl-L-lysyl-[protein] + malonyl-CoA. It participates in lipid metabolism; malonyl-CoA biosynthesis; malonyl-CoA from acetyl-CoA: step 1/1. Component of the acetyl coenzyme A carboxylase (ACC) complex. First, biotin carboxylase catalyzes the carboxylation of biotin on its carrier protein (BCCP) and then the CO(2) group is transferred by the carboxyltransferase to acetyl-CoA to form malonyl-CoA. This Polynucleobacter necessarius subsp. necessarius (strain STIR1) protein is Acetyl-coenzyme A carboxylase carboxyl transferase subunit alpha.